The primary structure comprises 87 residues: Probable Fe(2+)-trafficking protein (87 aa).

It belongs to the Fe(2+)-trafficking protein family.

Its function is as follows. Could be a mediator in iron transactions between iron acquisition and iron-requiring processes, such as synthesis and/or repair of Fe-S clusters in biosynthetic enzymes. The chain is Probable Fe(2+)-trafficking protein from Francisella tularensis subsp. holarctica (strain FTNF002-00 / FTA).